The following is a 121-amino-acid chain: Large ribosomal subunit protein bL12 (121 aa).

The protein belongs to the bacterial ribosomal protein bL12 family. In terms of assembly, homodimer. Part of the ribosomal stalk of the 50S ribosomal subunit. Forms a multimeric L10(L12)X complex, where L10 forms an elongated spine to which 2 to 4 L12 dimers bind in a sequential fashion. Binds GTP-bound translation factors.

Its function is as follows. Forms part of the ribosomal stalk which helps the ribosome interact with GTP-bound translation factors. Is thus essential for accurate translation. The sequence is that of Large ribosomal subunit protein bL12 from Shewanella frigidimarina (strain NCIMB 400).